The primary structure comprises 185 residues: Protein PBP4 (185 aa).

2 stretches are compositionally biased toward low complexity: residues 1-24 and 46-62; these read MTTT…LSAS and AQAA…QQQQ. 2 disordered regions span residues 1 to 116 and 147 to 168; these read MTTT…YNRE and ETAS…SKNK. Composition is skewed to polar residues over residues 73 to 83, 91 to 102, and 147 to 166; these read PANTKTKTIAS, KGSSTANGSSTN, and ETAS…SSSK.

In terms of assembly, interacts with IGO1, LSM12 and PBP1.

The protein resides in the cytoplasm. It localises to the nucleus. In Saccharomyces cerevisiae (strain ATCC 204508 / S288c) (Baker's yeast), this protein is Protein PBP4 (PBP4).